The following is a 638-amino-acid chain: Poly(A)-specific ribonuclease PARN (638 aa).

Asp-28 and Glu-30 together coordinate a divalent metal cation. The disordered stretch occupies residues 143–165 (REQYDEKRSQSNGAGALSYTSPN). Positions 152 to 165 (QSNGAGALSYTSPN) are enriched in polar residues. Ser-163 and Ser-167 each carry phosphoserine. The 68-residue stretch at 178 to 245 (KKFIDQVVEK…ERYIVISKVD (68 aa)) folds into the R3H domain. Residue Lys-220 is modified to N6-acetyllysine. Asp-292 and Asp-382 together coordinate a divalent metal cation. Lys-499 carries the post-translational modification N6-acetyllysine. A Phosphoserine modification is found at Ser-530. Ser-557 carries the phosphoserine; by MAPKAPK2 modification. Residues 573-638 (RAEAGLEARA…AKLFEVPDTW (66 aa)) form a disordered region. Phosphoserine is present on residues Ser-583 and Ser-587. A compositionally biased stretch (basic residues) spans 606–615 (KKAKKLKRMK). Ser-619, Ser-623, and Ser-627 each carry phosphoserine.

The protein belongs to the CAF1 family. In terms of assembly, homodimer. Found in a mRNA decay complex with RENT1, RENT2 and RENT3B. Interacts with KHSRP. Interacts with CELF1/CUGBP1. Interacts with ZC3HAV1 in an RNA-independent manner. Interacts with DHX36. Mg(2+) is required as a cofactor. Post-translationally, phosphorylation by MAPKAPK2, preventing GADD45A mRNA degradation after genotoxic stress.

It is found in the nucleus. It localises to the cytoplasm. Its subcellular location is the nucleolus. The enzyme catalyses Exonucleolytic cleavage of poly(A) to 5'-AMP.. In terms of biological role, 3'-exoribonuclease that has a preference for poly(A) tails of mRNAs, thereby efficiently degrading poly(A) tails. Exonucleolytic degradation of the poly(A) tail is often the first step in the decay of eukaryotic mRNAs and is also used to silence certain maternal mRNAs translationally during oocyte maturation and early embryonic development. Involved in nonsense-mediated mRNA decay, a critical process of selective degradation of mRNAs that contain premature stop codons. Also involved in degradation of inherently unstable mRNAs that contain AU-rich elements (AREs) in their 3'-UTR, possibly via its interaction with KHSRP. Probably mediates the removal of poly(A) tails of AREs mRNAs, which constitutes the first step of destabilization. Interacts with both the 3'-end poly(A) tail and the 5'-end cap structure during degradation, the interaction with the cap structure being required for an efficient degradation of poly(A) tails. Also able to recognize poly(A) tails of microRNAs such as MIR21 and H/ACA box snoRNAs (small nucleolar RNAs) leading to microRNAs degradation or snoRNA increased stability. The polypeptide is Poly(A)-specific ribonuclease PARN (PARN) (Bos taurus (Bovine)).